Reading from the N-terminus, the 53-residue chain is MEKFVCDVCGYIYDPVVGDPDNGVAPGTKFKDIPDTWVCPLCKLDKTHFSKVE.

The 53-residue stretch at 1–53 (MEKFVCDVCGYIYDPVVGDPDNGVAPGTKFKDIPDTWVCPLCKLDKTHFSKVE) folds into the Rubredoxin-like domain. Fe cation-binding residues include Cys6, Cys9, Cys39, and Cys42.

It belongs to the rubredoxin family. Fe(3+) is required as a cofactor.

Its function is as follows. Rubredoxin is a small nonheme, iron protein lacking acid-labile sulfide. Its single Fe, chelated to 4 Cys, functions as an electron acceptor and may also stabilize the conformation of the molecule. This chain is Rubredoxin-1 (rubR1), found in Clostridium perfringens (strain 13 / Type A).